Consider the following 122-residue polypeptide: Large ribosomal subunit protein uL14 (122 aa).

Belongs to the universal ribosomal protein uL14 family. As to quaternary structure, part of the 50S ribosomal subunit. Forms a cluster with proteins L3 and L19. In the 70S ribosome, L14 and L19 interact and together make contacts with the 16S rRNA in bridges B5 and B8.

Functionally, binds to 23S rRNA. Forms part of two intersubunit bridges in the 70S ribosome. The chain is Large ribosomal subunit protein uL14 from Pseudomonas aeruginosa (strain LESB58).